We begin with the raw amino-acid sequence, 890 residues long: Pentatricopeptide repeat-containing protein At3g57430, chloroplastic (890 aa).

The transit peptide at 1–44 (MSCPLAFTFSLPSIFPFPSQLLPFSRHKHPYLLRATPTSATEDV) directs the protein to the chloroplast. PPR repeat units lie at residues 61 to 95 (SPEW…GIKP), 96 to 130 (DNYA…GYGV), 132 to 162 (SVTV…ISER), 163 to 197 (NQVS…NVEP), 198 to 231 (SSFT…GLRK), 235 to 265 (NSFI…FGGR), 266 to 300 (DLVT…GVEP), 301 to 335 (DEFT…GSLD), 337 to 371 (NSFV…KIGL), 372 to 398 (WNAM…MEES), 404 to 438 (NSTT…GLDR), 439 to 473 (DRFV…DLVT), 474 to 504 (WNTM…ERKV), 516 to 550 (NSIT…NLAT), 551 to 581 (DVAV…IPQK), 582 to 616 (NVIT…GVKP), 617 to 652 (NEVT…GVEP), and 653 to 683 (SSDH…MPRD). The tract at residues 689–764 (AWSSLLGASR…EPGCSWIEHG (76 aa)) is type E motif. A type E(+) motif region spans residues 765-795 (DEVHKFVAGDSSHPQSEKLSGYLETLWERMR). The type DYW motif stretch occupies residues 796–890 (KEGYVPDTSC…NGTCSCGDYW (95 aa)).

Belongs to the PPR family. PCMP-H subfamily.

Its subcellular location is the plastid. The protein localises to the chloroplast. Functionally, involved in RNA editing events in chloroplasts. Required for the editing of a single site in ndhB and ndhF transcripts, which are two plastid-encoded subunits of the chloroplast NAD(P)H dehydrogenase (NDH) complex. Required for the editing of a single site in psbZ. Required for optimal activity of the NDH complex of the photosynthetic electron transport chain. This chain is Pentatricopeptide repeat-containing protein At3g57430, chloroplastic (PCMP-H81), found in Arabidopsis thaliana (Mouse-ear cress).